The following is a 194-amino-acid chain: Probable nicotinate-nucleotide adenylyltransferase (194 aa).

The protein belongs to the NadD family.

The enzyme catalyses nicotinate beta-D-ribonucleotide + ATP + H(+) = deamido-NAD(+) + diphosphate. Its pathway is cofactor biosynthesis; NAD(+) biosynthesis; deamido-NAD(+) from nicotinate D-ribonucleotide: step 1/1. Catalyzes the reversible adenylation of nicotinate mononucleotide (NaMN) to nicotinic acid adenine dinucleotide (NaAD). In Chlorobium luteolum (strain DSM 273 / BCRC 81028 / 2530) (Pelodictyon luteolum), this protein is Probable nicotinate-nucleotide adenylyltransferase.